The chain runs to 517 residues: Tyrosine 3-monooxygenase (517 aa).

The residue at position 33 (S33) is a Phosphoserine; by PKA. Fe cation-binding residues include H345, H350, and E390.

This sequence belongs to the biopterin-dependent aromatic amino acid hydroxylase family. It depends on Fe(2+) as a cofactor.

It localises to the cytoplasm. It is found in the perinuclear region. The protein localises to the cell projection. Its subcellular location is the axon. The catalysed reaction is (6R)-L-erythro-5,6,7,8-tetrahydrobiopterin + L-tyrosine + O2 = (4aS,6R)-4a-hydroxy-L-erythro-5,6,7,8-tetrahydrobiopterin + L-dopa. The protein operates within catecholamine biosynthesis; dopamine biosynthesis; dopamine from L-tyrosine: step 1/2. With respect to regulation, phosphorylation leads to an increase in the catalytic activity. In terms of biological role, involved in the synthesis of catecholamines, such as dopamine. Has a role in serotonin signaling. Required for normal explorative and foraging behavior. The chain is Tyrosine 3-monooxygenase (cat-2) from Caenorhabditis briggsae.